Reading from the N-terminus, the 262-residue chain is Putative 1-acyl-sn-glycerol-3-phosphate acyltransferase acl-1 (262 aa).

3 consecutive transmembrane segments (helical) span residues 3–23 (FLAI…PVIG), 29–49 (VYFG…SIPF), and 89–109 (IIIA…AWPV). The HXXXXD motif motif lies at 94–99 (HQSALD).

It belongs to the 1-acyl-sn-glycerol-3-phosphate acyltransferase family.

The protein localises to the membrane. It carries out the reaction a 1-acyl-sn-glycero-3-phosphate + an acyl-CoA = a 1,2-diacyl-sn-glycero-3-phosphate + CoA. It functions in the pathway phospholipid metabolism; CDP-diacylglycerol biosynthesis; CDP-diacylglycerol from sn-glycerol 3-phosphate: step 2/3. Converts lysophosphatidic acid (LPA) into phosphatidic acid by incorporating an acyl moiety at the sn-2 position of the glycerol backbone. The sequence is that of Putative 1-acyl-sn-glycerol-3-phosphate acyltransferase acl-1 (acl-1) from Caenorhabditis elegans.